Consider the following 191-residue polypeptide: UPF0312 protein Sputcn32_2702 (191 aa).

An N-terminal signal peptide occupies residues 1-22 (MKKQLLSALIGVSLLAPMAASA).

The protein belongs to the UPF0312 family. Type 1 subfamily.

It is found in the periplasm. The sequence is that of UPF0312 protein Sputcn32_2702 from Shewanella putrefaciens (strain CN-32 / ATCC BAA-453).